The primary structure comprises 361 residues: 3-dehydroquinate synthase (361 aa).

Belongs to the archaeal-type DHQ synthase family.

The catalysed reaction is 2-amino-2,3,7-trideoxy-D-lyxo-hept-6-ulosonate + NAD(+) + H2O = 3-dehydroquinate + NH4(+) + NADH + H(+). Functionally, catalyzes the oxidative deamination and cyclization of 2-amino-3,7-dideoxy-D-threo-hept-6-ulosonic acid (ADH) to yield 3-dehydroquinate (DHQ), which is fed into the canonical shikimic pathway of aromatic amino acid biosynthesis. This is 3-dehydroquinate synthase from Methanococcus maripaludis (strain C7 / ATCC BAA-1331).